A 417-amino-acid polypeptide reads, in one-letter code: Gelsolin (417 aa).

Residues 93 to 171 (KVPVLESHYG…VVQGKEPAHL (79 aa)) form a Gelsolin-like 4 repeat. Ca(2+) contacts are provided by G107, D108, E138, D150, G155, P157, T187, N227, D228, E250, D331, D332, and E354. Gelsolin-like repeat units lie at residues 213–261 (RAVE…LKIL) and 316–392 (IEEV…PTFI).

This sequence belongs to the villin/gelsolin family.

It is found in the cytoplasm. Its subcellular location is the cytoskeleton. Functionally, calcium-regulated, actin-modulating protein that binds to the plus (or barbed) ends of actin monomers or filaments, preventing monomer exchange (end-blocking or capping). It can promote the assembly of monomers into filaments (nucleation) as well as sever filaments already formed. Plays a role in ciliogenesis. The polypeptide is Gelsolin (gsn) (Xenopus laevis (African clawed frog)).